The chain runs to 141 residues: Large ribosomal subunit protein uL11 (141 aa).

The protein belongs to the universal ribosomal protein uL11 family. Part of the ribosomal stalk of the 50S ribosomal subunit. Interacts with L10 and the large rRNA to form the base of the stalk. L10 forms an elongated spine to which L12 dimers bind in a sequential fashion forming a multimeric L10(L12)X complex. Post-translationally, one or more lysine residues are methylated.

In terms of biological role, forms part of the ribosomal stalk which helps the ribosome interact with GTP-bound translation factors. In Chlamydia trachomatis serovar A (strain ATCC VR-571B / DSM 19440 / HAR-13), this protein is Large ribosomal subunit protein uL11.